The primary structure comprises 899 residues: Ewing's tumor-associated antigen 1 homolog (899 aa).

Residues 1–82 form a disordered region; the sequence is MSRRRKHGDS…TEERYETPKR (82 aa). Over residues 71–81 the composition is skewed to basic and acidic residues; that stretch reads SNTEERYETPK. The ATR-activation domain (AAD) signature appears at 105 to 111; the sequence is IFWDQNS. The stretch at 180-210 forms a coiled coil; that stretch reads TKLKSQNQEEELMKLAKQFDKNMEELDVIQE. Glycyl lysine isopeptide (Lys-Gly) (interchain with G-Cter in SUMO2) cross-links involve residues lysine 416 and lysine 444. Phosphoserine is present on serine 467. Glycyl lysine isopeptide (Lys-Gly) (interchain with G-Cter in SUMO2) cross-links involve residues lysine 485 and lysine 539. The RBM1 motif motif lies at 607 to 622; sequence DDVDDDILYQACDDIE. Serine 810 bears the Phosphoserine mark. Positions 833-899 are disordered; the sequence is NKTVNPLPGK…AQASSVKKGR (67 aa). Over residues 859-877 the composition is skewed to basic and acidic residues; it reads PSKEEEEKNRKCSPEEIQR. The short motif at 868–890 is the RBM2 motif element; the sequence is RKCSPEEIQRKRQAALIRRMAKA.

Interacts (via RBM1 motif) with RPA1. Interacts (via RBM2 motif) with RPA2. Interacts (via the ATR-activation domain motif) with ATR. In terms of processing, phosphorylated by ATR.

It localises to the nucleus. Its function is as follows. Replication stress response protein that accumulates at DNA damage sites and promotes replication fork progression and integrity. Recruited to stalled replication forks via interaction with the RPA complex and directly stimulates ATR kinase activity independently of TOPBP1. Probably only regulates a subset of ATR targets. This is Ewing's tumor-associated antigen 1 homolog from Bos taurus (Bovine).